The primary structure comprises 842 residues: GPI ethanolamine phosphate transferase 2 (842 aa).

A glycan (N-linked (GlcNAc...) asparagine) is linked at N186. Residues 409 to 429 (YNYPLLFIGCFLSIVITGTIY) traverse the membrane as a helical segment. N-linked (GlcNAc...) asparagine glycosylation is present at N441. The next 2 membrane-spanning stretches (helical) occupy residues 442 to 462 (TSIL…SSFI) and 468 to 488 (FWWW…NFSS). N-linked (GlcNAc...) asparagine glycosylation occurs at N506. The helical transmembrane segment at 524-544 (GNIDALWWLNLITVTVVGLNL) threads the bilayer. Residue N551 is glycosylated (N-linked (GlcNAc...) asparagine). Residues 554-574 (VSLLGFSDLLSMGLLSMITFL) form a helical membrane-spanning segment. A glycan (N-linked (GlcNAc...) asparagine) is linked at N578. Helical transmembrane passes span 615–635 (IHTA…AVLV), 698–718 (YLLA…QSGG), and 740–760 (IYVV…YWSF). An N-linked (GlcNAc...) asparagine glycan is attached at N771. 2 consecutive transmembrane segments (helical) span residues 783–803 (YPFI…CIIL) and 821–841 (MVWT…LLLL).

This sequence belongs to the PIGG/PIGN/PIGO family. PIGG subfamily.

It localises to the endoplasmic reticulum membrane. It participates in glycolipid biosynthesis; glycosylphosphatidylinositol-anchor biosynthesis. In terms of biological role, ethanolamine phosphate transferase involved in glycosylphosphatidylinositol-anchor biosynthesis. Transfers ethanolamine phosphate to the GPI second mannose. The polypeptide is GPI ethanolamine phosphate transferase 2 (LAS21) (Candida glabrata (strain ATCC 2001 / BCRC 20586 / JCM 3761 / NBRC 0622 / NRRL Y-65 / CBS 138) (Yeast)).